Reading from the N-terminus, the 138-residue chain is MCSAGQLLGGGGGGGGSGGERDEDRDALAERAAAGTEQESGASPRRRGRRPLEEREQDIEESQNHTGEPVGDDYKKMGTLFGELNKSLLNMGFTRMYFGEQIVEPVIVIFFWVMLWFLGLPAFGLVALLCLVIIYVQQ.

Positions 1-73 (MCSAGQLLGG…NHTGEPVGDD (73 aa)) are disordered. Residues 7–18 (LLGGGGGGGGSG) are compositionally biased toward gly residues. Over residues 19 to 29 (GERDEDRDALA) the composition is skewed to basic and acidic residues. Low complexity predominate over residues 30 to 43 (ERAAAGTEQESGAS). Residues 106 to 126 (VIVIFFWVMLWFLGLPAFGLV) form a helical membrane-spanning segment.

This sequence belongs to the FAM241 family.

The protein resides in the membrane. This is an uncharacterized protein from Bos taurus (Bovine).